A 208-amino-acid polypeptide reads, in one-letter code: Putative ribosomal protein uS2-like (208 aa).

It belongs to the universal ribosomal protein uS2 family.

The protein resides in the plastid. It is found in the chloroplast. This Chlamydomonas reinhardtii (Chlamydomonas smithii) protein is Putative ribosomal protein uS2-like (rps2-2).